A 433-amino-acid polypeptide reads, in one-letter code: ATP-dependent protease ATPase subunit HslU (433 aa).

ATP contacts are provided by residues Val18, 60–65, Asp246, Glu311, and Arg383; that span reads GVGKTE.

It belongs to the ClpX chaperone family. HslU subfamily. A double ring-shaped homohexamer of HslV is capped on each side by a ring-shaped HslU homohexamer. The assembly of the HslU/HslV complex is dependent on binding of ATP.

It localises to the cytoplasm. Its function is as follows. ATPase subunit of a proteasome-like degradation complex; this subunit has chaperone activity. The binding of ATP and its subsequent hydrolysis by HslU are essential for unfolding of protein substrates subsequently hydrolyzed by HslV. HslU recognizes the N-terminal part of its protein substrates and unfolds these before they are guided to HslV for hydrolysis. The chain is ATP-dependent protease ATPase subunit HslU from Rhodopseudomonas palustris (strain BisA53).